The sequence spans 288 residues: Phosphatidylserine decarboxylase proenzyme (288 aa).

Catalysis depends on charge relay system; for autoendoproteolytic cleavage activity residues Asp90, His147, and Ser254. Ser254 serves as the catalytic Schiff-base intermediate with substrate; via pyruvic acid; for decarboxylase activity. Position 254 is a pyruvic acid (Ser); by autocatalysis (Ser254).

Belongs to the phosphatidylserine decarboxylase family. PSD-B subfamily. Prokaryotic type I sub-subfamily. As to quaternary structure, heterodimer of a large membrane-associated beta subunit and a small pyruvoyl-containing alpha subunit. Requires pyruvate as cofactor. In terms of processing, is synthesized initially as an inactive proenzyme. Formation of the active enzyme involves a self-maturation process in which the active site pyruvoyl group is generated from an internal serine residue via an autocatalytic post-translational modification. Two non-identical subunits are generated from the proenzyme in this reaction, and the pyruvate is formed at the N-terminus of the alpha chain, which is derived from the carboxyl end of the proenzyme. The autoendoproteolytic cleavage occurs by a canonical serine protease mechanism, in which the side chain hydroxyl group of the serine supplies its oxygen atom to form the C-terminus of the beta chain, while the remainder of the serine residue undergoes an oxidative deamination to produce ammonia and the pyruvoyl prosthetic group on the alpha chain. During this reaction, the Ser that is part of the protease active site of the proenzyme becomes the pyruvoyl prosthetic group, which constitutes an essential element of the active site of the mature decarboxylase.

Its subcellular location is the cell membrane. It carries out the reaction a 1,2-diacyl-sn-glycero-3-phospho-L-serine + H(+) = a 1,2-diacyl-sn-glycero-3-phosphoethanolamine + CO2. It participates in phospholipid metabolism; phosphatidylethanolamine biosynthesis; phosphatidylethanolamine from CDP-diacylglycerol: step 2/2. Its function is as follows. Catalyzes the formation of phosphatidylethanolamine (PtdEtn) from phosphatidylserine (PtdSer). The chain is Phosphatidylserine decarboxylase proenzyme from Hamiltonella defensa subsp. Acyrthosiphon pisum (strain 5AT).